A 129-amino-acid chain; its full sequence is uncharacterized protein (129 aa).

A run of 3 helical transmembrane segments spans residues 15-35 (IFII…IFVF), 48-68 (IFSF…YYFF), and 107-127 (INIF…NLVC).

It is found in the membrane. This is an uncharacterized protein from Saccharomyces cerevisiae (strain ATCC 204508 / S288c) (Baker's yeast).